The primary structure comprises 308 residues: Ribosomal RNA small subunit methyltransferase H (308 aa).

S-adenosyl-L-methionine contacts are provided by residues 33–35 (GGH), D52, Y81, D99, and Q106.

The protein belongs to the methyltransferase superfamily. RsmH family.

It is found in the cytoplasm. It catalyses the reaction cytidine(1402) in 16S rRNA + S-adenosyl-L-methionine = N(4)-methylcytidine(1402) in 16S rRNA + S-adenosyl-L-homocysteine + H(+). In terms of biological role, specifically methylates the N4 position of cytidine in position 1402 (C1402) of 16S rRNA. The polypeptide is Ribosomal RNA small subunit methyltransferase H (Francisella philomiragia subsp. philomiragia (strain ATCC 25017 / CCUG 19701 / FSC 153 / O#319-036)).